The following is a 225-amino-acid chain: NAD(P)H-quinone oxidoreductase subunit K, chloroplastic (225 aa).

Cys43, Cys44, Cys108, and Cys139 together coordinate [4Fe-4S] cluster.

This sequence belongs to the complex I 20 kDa subunit family. In terms of assembly, NDH is composed of at least 16 different subunits, 5 of which are encoded in the nucleus. Requires [4Fe-4S] cluster as cofactor.

It localises to the plastid. The protein localises to the chloroplast thylakoid membrane. It catalyses the reaction a plastoquinone + NADH + (n+1) H(+)(in) = a plastoquinol + NAD(+) + n H(+)(out). The catalysed reaction is a plastoquinone + NADPH + (n+1) H(+)(in) = a plastoquinol + NADP(+) + n H(+)(out). Functionally, NDH shuttles electrons from NAD(P)H:plastoquinone, via FMN and iron-sulfur (Fe-S) centers, to quinones in the photosynthetic chain and possibly in a chloroplast respiratory chain. The immediate electron acceptor for the enzyme in this species is believed to be plastoquinone. Couples the redox reaction to proton translocation, and thus conserves the redox energy in a proton gradient. The protein is NAD(P)H-quinone oxidoreductase subunit K, chloroplastic of Oenothera argillicola (Appalachian evening primrose).